Here is a 349-residue protein sequence, read N- to C-terminus: GDSL esterase/lipase At1g58725 (349 aa).

The N-terminal stretch at 1-19 (MKIQILLFALVLIFVEANA) is a signal peptide. An N-linked (GlcNAc...) asparagine glycan is attached at N25. The Nucleophile role is filled by S37. N316 is a glycosylation site (N-linked (GlcNAc...) asparagine). Residues D324 and H327 contribute to the active site.

This sequence belongs to the 'GDSL' lipolytic enzyme family.

Its subcellular location is the secreted. The polypeptide is GDSL esterase/lipase At1g58725 (Arabidopsis thaliana (Mouse-ear cress)).